The chain runs to 375 residues: MQCALYDAGRCRSCQWITQPIPEQLSAKTADLKNLLADFPVEEWCAPVSGPEQGFRNKAKMVVSGSVEKTLLGMLHRDGTPEDLCDCPLYPASFAPVFAALKPFIARAGLTPYNVARKRGELKYILLTESQSDGGMMLRFVLRSDTKLAQLRKALPWLHEQLPQLKVITVNIQPVHMAIMEGETEIYLTEQQALAERFNDVPLWIRPQSFFQTNPAVASQLYATARDWVRQLPVKHMWDLFCGVGGFGLHCATPDMQLTGIEIAPEAIACAKQSAAELGLTRLQFQALDSTQFATAQGEVPELVLVNPPRRGIGKPLCDYLSTMAPRFIIYSSCNAQTMAKDIRELPGYRIERVQLFDMFPHTAHYEVLTLLVKQ.

Cys-3, Cys-11, Cys-14, and Cys-87 together coordinate [4Fe-4S] cluster. 4 residues coordinate S-adenosyl-L-methionine: Gln-212, Phe-241, Glu-262, and Asn-307. The active-site Nucleophile is the Cys-334.

The protein belongs to the class I-like SAM-binding methyltransferase superfamily. RNA M5U methyltransferase family. RlmC subfamily.

It catalyses the reaction uridine(747) in 23S rRNA + S-adenosyl-L-methionine = 5-methyluridine(747) in 23S rRNA + S-adenosyl-L-homocysteine + H(+). Its function is as follows. Catalyzes the formation of 5-methyl-uridine at position 747 (m5U747) in 23S rRNA. This chain is 23S rRNA (uracil(747)-C(5))-methyltransferase RlmC, found in Shigella flexneri serotype 5b (strain 8401).